Reading from the N-terminus, the 391-residue chain is 4-hydroxy-3-methylbut-2-en-1-yl diphosphate synthase (flavodoxin) (391 aa).

Residues cysteine 281, cysteine 284, cysteine 316, and glutamate 323 each contribute to the [4Fe-4S] cluster site. Positions 372–391 (EMGGEDGQGGIKGSPVVSVS) are disordered.

It belongs to the IspG family. The cofactor is [4Fe-4S] cluster.

It catalyses the reaction (2E)-4-hydroxy-3-methylbut-2-enyl diphosphate + oxidized [flavodoxin] + H2O + 2 H(+) = 2-C-methyl-D-erythritol 2,4-cyclic diphosphate + reduced [flavodoxin]. It participates in isoprenoid biosynthesis; isopentenyl diphosphate biosynthesis via DXP pathway; isopentenyl diphosphate from 1-deoxy-D-xylulose 5-phosphate: step 5/6. Its function is as follows. Converts 2C-methyl-D-erythritol 2,4-cyclodiphosphate (ME-2,4cPP) into 1-hydroxy-2-methyl-2-(E)-butenyl 4-diphosphate. The chain is 4-hydroxy-3-methylbut-2-en-1-yl diphosphate synthase (flavodoxin) from Renibacterium salmoninarum (strain ATCC 33209 / DSM 20767 / JCM 11484 / NBRC 15589 / NCIMB 2235).